A 551-amino-acid chain; its full sequence is Chaperonin GroEL (551 aa).

ATP contacts are provided by residues 30-33, lysine 51, 87-91, glycine 415, 479-481, and aspartate 495; these read TLGP, DGTTT, and NAA. The segment at 523–551 is disordered; the sequence is DSPKEDKSSDMPSPSAGGMGGMGGMGGMM. Residues 539-551 are compositionally biased toward gly residues; that stretch reads GGMGGMGGMGGMM.

The protein belongs to the chaperonin (HSP60) family. As to quaternary structure, forms a cylinder of 14 subunits composed of two heptameric rings stacked back-to-back. Interacts with the co-chaperonin GroES.

Its subcellular location is the cytoplasm. The catalysed reaction is ATP + H2O + a folded polypeptide = ADP + phosphate + an unfolded polypeptide.. Its function is as follows. Together with its co-chaperonin GroES, plays an essential role in assisting protein folding. The GroEL-GroES system forms a nano-cage that allows encapsulation of the non-native substrate proteins and provides a physical environment optimized to promote and accelerate protein folding. This chain is Chaperonin GroEL, found in Buchnera aphidicola subsp. Chaetophorus leucomelas.